Here is a 352-residue protein sequence, read N- to C-terminus: B1 bradykinin receptor (352 aa).

Topologically, residues 1–41 (MASWPPLELQSSNQSQLFPQNATACDNAPEAWDLLHRVLPT) are extracellular. N-linked (GlcNAc...) asparagine glycans are attached at residues asparagine 13 and asparagine 21. The helical transmembrane segment at 42–62 (FIISICSFGLLGNLFVLLVFL) threads the bilayer. Residues 63–72 (LPRRRLNVAE) are Cytoplasmic-facing. Residues 73–93 (IYLANLAASDLVFVLGLPFWA) form a helical membrane-spanning segment. Residues 94 to 110 (ENIWNQFNWPFGALLCR) are Extracellular-facing. Cysteine 109 and cysteine 188 form a disulfide bridge. A helical transmembrane segment spans residues 111–131 (GINGVIKANLFISIFLVVAIS). Topologically, residues 132–153 (QDRYCLLVHPMASRRRQRRRQA) are cytoplasmic. A helical transmembrane segment spans residues 154 to 174 (RVTCVLIWVVGGLLSIPTFLL). Topologically, residues 175-206 (RSIQAVPDLNITACILLLPHEAWHFARIVELN) are extracellular. N-linked (GlcNAc...) asparagine glycosylation occurs at asparagine 184. Residues 207–227 (ILAFLLPLAAIVFFNYHILAS) traverse the membrane as a helical segment. Over 228-250 (LRGREEVSRTRCGGRKDSKTTAL) the chain is Cytoplasmic. Residues 251–271 (ILTLVVAFLVCWAPYHFFAFL) traverse the membrane as a helical segment. Residues 272–294 (EFLFQVQAIRGCFWEDFIDLGLQ) are Extracellular-facing. Residues 295–315 (LANFLAFTNSSLNPVIYVFVG) traverse the membrane as a helical segment. Topologically, residues 316–352 (RLFRTKVWELYKQCTPKSLAPISSSHRKEIFQLFWRN) are cytoplasmic. Residue cysteine 329 is the site of S-palmitoyl cysteine attachment.

The protein belongs to the G-protein coupled receptor 1 family. Bradykinin receptor subfamily. BDKRB1 sub-subfamily.

Its subcellular location is the cell membrane. Its function is as follows. This is a receptor for bradykinin. Could be a factor in chronic pain and inflammation. The polypeptide is B1 bradykinin receptor (BDKRB1) (Chlorocebus aethiops (Green monkey)).